A 314-amino-acid polypeptide reads, in one-letter code: MNQLSESYKARLSNLLPSCVAFFKYLLKRLTHDRVNVNAGYLAYITLLSIVPMLTVLLSILSKFPVFANVGEVLQGYIIENFVPASGEAVHTALQEFVANTGKMSAVGGGFLFIAALMLISNIDKNLNYIWRVKDKRRLVFSFSMYWMVLTLGPILVGASIAATSYVTSLQILENETLSGAFNLFLRWLPLLLSFFAFLGLYILVPNKKVHLAHGAVGAAVAAILFELSKKGFALYITQFPSYQLIYGALAAIPILFVWVYLCWMIVLLGAEVTAALGEQEHWSEDLDMIHSSAESQLANEGSESSDSANSTSQ.

The next 6 helical transmembrane spans lie at 41–61 (YLAY…LSIL), 104–124 (MSAV…SNID), 139–159 (LVFS…LVGA), 185–205 (FLRW…YILV), 217–237 (VGAA…ALYI), and 249–269 (ALAA…IVLL). A disordered region spans residues 295-314 (ESQLANEGSESSDSANSTSQ).

It belongs to the UPF0761 family.

The protein resides in the cell inner membrane. The protein is UPF0761 membrane protein VP0125 of Vibrio parahaemolyticus serotype O3:K6 (strain RIMD 2210633).